Consider the following 501-residue polypeptide: Alveolysin (501 aa).

Residues 1–32 (MKKKSNHLKGRKVLVSLLVSLQVFAFASISSA) form the signal peptide. 4 beta stranded membrane passes run 191 to 204 (QNQI…NAKV), 211 to 220 (IDFNAVANGE), 289 to 298 (SNDVQTAFKL), and 306 to 318 (QASG…YENS). The short motif at 460–470 (ECTGLAWEWWR) is the Conserved undecapeptide element. The Cholesterol binding signature appears at 492-493 (TL).

The protein belongs to the cholesterol-dependent cytolysin family. As to quaternary structure, homooligomeric pore complex of 35 to 50 subunits; when inserted in the host membrane.

The protein resides in the secreted. The protein localises to the host cell membrane. With respect to regulation, inhibited by cholesterol and thiol reagents. In terms of biological role, a cholesterol-dependent toxin that causes cytolysis by forming pores in cholesterol containing host membranes. After binding to target membranes, the protein undergoes a major conformation change, leading to its insertion in the host membrane and formation of an oligomeric pore complex. Cholesterol is required for binding to host cell membranes, membrane insertion and pore formation; cholesterol binding is mediated by a Thr-Leu pair in the C-terminus. Can be reversibly inactivated by oxidation. The sequence is that of Alveolysin (alv) from Paenibacillus alvei (Bacillus alvei).